Consider the following 199-residue polypeptide: NADH-quinone oxidoreductase subunit C (199 aa).

Belongs to the complex I 30 kDa subunit family. NDH-1 is composed of 14 different subunits. Subunits NuoB, C, D, E, F, and G constitute the peripheral sector of the complex.

It localises to the cell inner membrane. The enzyme catalyses a quinone + NADH + 5 H(+)(in) = a quinol + NAD(+) + 4 H(+)(out). In terms of biological role, NDH-1 shuttles electrons from NADH, via FMN and iron-sulfur (Fe-S) centers, to quinones in the respiratory chain. The immediate electron acceptor for the enzyme in this species is believed to be ubiquinone. Couples the redox reaction to proton translocation (for every two electrons transferred, four hydrogen ions are translocated across the cytoplasmic membrane), and thus conserves the redox energy in a proton gradient. The polypeptide is NADH-quinone oxidoreductase subunit C (Cupriavidus pinatubonensis (strain JMP 134 / LMG 1197) (Cupriavidus necator (strain JMP 134))).